We begin with the raw amino-acid sequence, 85 residues long: uncharacterized protein (85 aa).

Residues 39–59 (FILFEISMYIIFIVTFCYKII) traverse the membrane as a helical segment.

The protein localises to the host membrane. This is an uncharacterized protein from Gallid herpesvirus 2 (strain Chicken/Md5/ATCC VR-987) (GaHV-2).